Here is a 354-residue protein sequence, read N- to C-terminus: uncharacterized protein (354 aa).

A disordered region spans residues Gln-96–Gln-130. Basic and acidic residues predominate over residues Lys-113–Ser-127.

This is an uncharacterized protein from Caenorhabditis elegans.